The sequence spans 236 residues: UPF0257 lipoprotein YnfC (236 aa).

The first 16 residues, 1–16 (MKKPLLLTLLCMILAG), serve as a signal peptide directing secretion. C17 carries the N-palmitoyl cysteine lipid modification. C17 carries S-diacylglycerol cysteine lipidation.

It belongs to the UPF0257 family.

The protein resides in the cell membrane. The chain is UPF0257 lipoprotein YnfC from Salmonella dublin (strain CT_02021853).